Here is a 268-residue protein sequence, read N- to C-terminus: MKAKKKWGQNFIFDKNLLSKIVRASGVGEEDFVLEVGTGHGGLTEELAKKVKKVVSFEIDKELFEMSREKLKIYKNVVIINEDILEVDLLEIAQEHFDGNSFKVVANLPYYITSPIIMKMLDCKLVKEMTVLVQKEVAERICALPGTKDYGMLTVFVNFKAKPEILFNLPPKVFVPPPKVESSLLKLKVYDKPLVEVKDEKLFSEVVRAAFGQRRKVLSNSLKVLGFSKEVLHETLLKVGISPQARGETLSIDQFANLANALYLLIKE.

The S-adenosyl-L-methionine site is built by asparagine 10, isoleucine 12, glycine 37, glutamate 58, aspartate 83, and asparagine 107.

This sequence belongs to the class I-like SAM-binding methyltransferase superfamily. rRNA adenine N(6)-methyltransferase family. RsmA subfamily.

The protein localises to the cytoplasm. It catalyses the reaction adenosine(1518)/adenosine(1519) in 16S rRNA + 4 S-adenosyl-L-methionine = N(6)-dimethyladenosine(1518)/N(6)-dimethyladenosine(1519) in 16S rRNA + 4 S-adenosyl-L-homocysteine + 4 H(+). Its function is as follows. Specifically dimethylates two adjacent adenosines (A1518 and A1519) in the loop of a conserved hairpin near the 3'-end of 16S rRNA in the 30S particle. May play a critical role in biogenesis of 30S subunits. This is Ribosomal RNA small subunit methyltransferase A from Caldanaerobacter subterraneus subsp. tengcongensis (strain DSM 15242 / JCM 11007 / NBRC 100824 / MB4) (Thermoanaerobacter tengcongensis).